The following is an 876-amino-acid chain: Alanine--tRNA ligase (876 aa).

The Zn(2+) site is built by His568, His572, Cys670, and His674.

This sequence belongs to the class-II aminoacyl-tRNA synthetase family. Requires Zn(2+) as cofactor.

It is found in the cytoplasm. The enzyme catalyses tRNA(Ala) + L-alanine + ATP = L-alanyl-tRNA(Ala) + AMP + diphosphate. Catalyzes the attachment of alanine to tRNA(Ala) in a two-step reaction: alanine is first activated by ATP to form Ala-AMP and then transferred to the acceptor end of tRNA(Ala). Also edits incorrectly charged Ser-tRNA(Ala) and Gly-tRNA(Ala) via its editing domain. This Anaplasma phagocytophilum (strain HZ) protein is Alanine--tRNA ligase.